The following is a 684-amino-acid chain: MVGPEDAGQGAVYRCGEERHGLTDAADEEEGEGEAGDRQTDILQLYISRPAIKMTNGDLNYLPQGGAGEGDMPSAGDMHSLSTHKEDIKQPNGGLLVADSTRPQGCACHRQCCSLSEAVPSPGTPPGSSPISSSSSSPVSARTVAGYFVSEEADRFRFLDVSRQSCRNTFEGSRRQSAPDHLADGLSLPAESPGTAEQDGDRPWKVGIAEFFSRNFFSKRTKDPKSSSSVPGWKLFGKVPPRETAQKDSKIIQQDDSSGSLSSVSTPNLLNTGEYEARTGRSCKAPSQSTRKKKFEFEPLSTTALILEDRPSNLPAKSVHETLRHRQEYDEMVAEAKKREVKEAQRRKKLMKERIRQEENIASAMVIWNTEILPNWDVMRSTRRVRDLWWQGLPPSIRGKVWSLAIGNELNITPELYEIFLSRAKERWKSFSETNSENENEDAGASLADREASLELIKLDISRTFPSLYIFQKGGPYHDLLHSILGAYTCYRPDVGYVQGMSFIAAVLILNLEEADAFIAFANLLNKPCQLAFFRVDHSMMLKYFAAFEVFFEENLPKLFFHFNAYSLTPDLYLIDWIFTLYSKSLPLDLACRVWDVFCRDGEEFLFRTALGILRLYEDILLQMDFIHIAQFLTKLPEDITSEKLFGCIAAIQMQNSNKKWTQVFTSLMKDYKEGDKMSQASKT.

Disordered stretches follow at residues Met1 to Asp41, Val119 to Pro138, Thr169 to Arg202, and Lys219 to Thr290. The span at Ala25–Glu34 shows a compositional bias: acidic residues. The segment covering Ser129 to Pro138 has biased composition (low complexity). Basic and acidic residues-rich tracts occupy residues Gly172–Ala183 and Pro240–Lys250. The stretch at Glu331–Met365 forms a coiled coil. A Rab-GAP TBC domain is found at Gly392–Gly602.

Its function is as follows. May act as a GTPase-activating protein for Rab family protein(s). The protein is TBC1 domain family member 12 (tbc1d12) of Xenopus tropicalis (Western clawed frog).